Consider the following 306-residue polypeptide: Ribonuclease BN (306 aa).

Zn(2+) contacts are provided by histidine 64, histidine 66, aspartate 68, histidine 69, histidine 141, aspartate 212, and histidine 270. Catalysis depends on aspartate 68, which acts as the Proton acceptor.

This sequence belongs to the RNase Z family. RNase BN subfamily. Homodimer. The cofactor is Zn(2+).

Its function is as follows. Zinc phosphodiesterase, which has both exoribonuclease and endoribonuclease activities. In Klebsiella pneumoniae subsp. pneumoniae (strain ATCC 700721 / MGH 78578), this protein is Ribonuclease BN.